Consider the following 190-residue polypeptide: MINHFKPALLMLLVWTLITGVFYPVLVTHLGQLLFPRQANGSLIEKDGKVLGSELIGQPFGDPRYFWGRPSATAPHAYNAGASSGSNQGPTNPALLAAIKSRVQALRNADPGNTAPVPVDLVTASGSGLDPHISPAAAAYQAARVARLRNLSLPVVEDLVKRYTEGRQFGFLGEPRVNVLKLNLALDALR.

Residues 7–27 (PALLMLLVWTLITGVFYPVLV) traverse the membrane as a helical segment.

The protein belongs to the KdpC family. The system is composed of three essential subunits: KdpA, KdpB and KdpC.

Its subcellular location is the cell inner membrane. In terms of biological role, part of the high-affinity ATP-driven potassium transport (or Kdp) system, which catalyzes the hydrolysis of ATP coupled with the electrogenic transport of potassium into the cytoplasm. This subunit acts as a catalytic chaperone that increases the ATP-binding affinity of the ATP-hydrolyzing subunit KdpB by the formation of a transient KdpB/KdpC/ATP ternary complex. The polypeptide is Potassium-transporting ATPase KdpC subunit (Methylococcus capsulatus (strain ATCC 33009 / NCIMB 11132 / Bath)).